We begin with the raw amino-acid sequence, 183 residues long: Large ribosomal subunit protein uL6 (183 aa).

It belongs to the universal ribosomal protein uL6 family. As to quaternary structure, part of the 50S ribosomal subunit.

Its function is as follows. This protein binds to the 23S rRNA, and is important in its secondary structure. It is located near the subunit interface in the base of the L7/L12 stalk, and near the tRNA binding site of the peptidyltransferase center. This is Large ribosomal subunit protein uL6 from Chlamydia pneumoniae (Chlamydophila pneumoniae).